The chain runs to 498 residues: MTVFLSFAFFAAILTHIGCSNQRRNPENGGRRYNRIQHGQCAYTFILPEHDGNCRESATEQYNTNALQRDAPHVEPDFSSQKLQHLEHVMENYTQWLQKLENYIVENMKSEMAQIQQNAVQNHTATMLEIGTSLLSQTAEQTRKLTDVETQVLNQTSRLEIQLLENSLSTYKLEKQLLQQTNEILKIHEKNSLLEHKILEMEGKHKEELDTLKEEKENLQGLVSRQTFIIQELEKQLSRATNNNSILQKQQLELMDTVHNLISLCTKEGVLLKGGKREEEKPFRDCADVYQAGFNKSGIYTIYFNNMPEPKKVFCNMDVNGGGWTVIQHREDGSLDFQRGWKEYKMGFGNPSGEYWLGNEFIFAITSQRQYMLRIELMDWEGNRAYSQYDRFHIGNEKQNYRLYLKGHTGTAGKQSSLILHGADFSTKDADNDNCMCKCALMLTGGWWFDACGPSNLNGMFYTAGQNHGKLNGIKWHYFKGPSYSLRSTTMMIRPLDF.

The first 19 residues, 1–19 (MTVFLSFAFFAAILTHIGC), serve as a signal peptide directing secretion. The stretch at 81 to 119 (QKLQHLEHVMENYTQWLQKLENYIVENMKSEMAQIQQNA) forms a coiled coil. Asn-92, Asn-122, Asn-154, Asn-243, and Asn-295 each carry an N-linked (GlcNAc...) asparagine glycan. The stretch at 153-261 (LNQTSRLEIQ…LELMDTVHNL (109 aa)) forms a coiled coil. In terms of domain architecture, Fibrinogen C-terminal spans 277-497 (REEEKPFRDC…STTMMIRPLD (221 aa)). Intrachain disulfides connect Cys-286-Cys-315 and Cys-439-Cys-452.

Homooligomer. Interacts with TEK/TIE2. Interacts with SVEP1/polydom. Interacts with THBD; this interaction significantly inhibits the generation of activated PC and TAFIa/CPB2 by the thrombin/thrombomodulin complex.

It is found in the secreted. Binds and activates TEK/TIE2 receptor by inducing its dimerization and tyrosine phosphorylation. Plays an important role in the regulation of angiogenesis, endothelial cell survival, proliferation, migration, adhesion and cell spreading, reorganization of the actin cytoskeleton, but also maintenance of vascular quiescence. Required for normal angiogenesis and heart development during embryogenesis. After birth, activates or inhibits angiogenesis, depending on the context. Inhibits angiogenesis and promotes vascular stability in quiescent vessels, where endothelial cells have tight contacts. In quiescent vessels, ANGPT1 oligomers recruit TEK to cell-cell contacts, forming complexes with TEK molecules from adjoining cells, and this leads to preferential activation of phosphatidylinositol 3-kinase and the AKT1 signaling cascades. In migrating endothelial cells that lack cell-cell adhesions, ANGT1 recruits TEK to contacts with the extracellular matrix, leading to the formation of focal adhesion complexes, activation of PTK2/FAK and of the downstream kinases MAPK1/ERK2 and MAPK3/ERK1, and ultimately to the stimulation of sprouting angiogenesis. Mediates blood vessel maturation/stability. Implicated in endothelial developmental processes later and distinct from that of VEGF. Appears to play a crucial role in mediating reciprocal interactions between the endothelium and surrounding matrix and mesenchyme. In Mus musculus (Mouse), this protein is Angiopoietin-1 (Angpt1).